We begin with the raw amino-acid sequence, 568 residues long: Zinc finger protein 648 (568 aa).

Positions 1 to 11 are enriched in basic and acidic residues; it reads MAQVDSQDRWG. The tract at residues 1-106 is disordered; that stretch reads MAQVDSQDRW…MSGKASWSRD (106 aa). C2H2-type zinc fingers lie at residues 279–301, 307–329, 335–358, 364–386, 392–414, 420–442, 448–470, 476–498, 504–526, and 532–554; these read YACE…RRLH, YQCS…IRTH, YPCP…RNMH, FPCS…QRTH, FRCP…QRVH, FPCP…QTLH, FKCA…QRIH, FPCT…QQIH, FLCA…IRMH, and YQCE…RAKH. The disordered stretch occupies residues 548 to 568; sequence QRHRAKHGTCKKEPIPSSSDE.

The protein belongs to the krueppel C2H2-type zinc-finger protein family.

Its subcellular location is the nucleus. In terms of biological role, may be involved in transcriptional regulation. This is Zinc finger protein 648 (ZNF648) from Homo sapiens (Human).